The primary structure comprises 819 residues: Capsid-associated protein Vp91 (819 aa).

Positions 1–18 (MSDVVLLVLAIILITIFT) are cleaved as a signal peptide. The segment at 147 to 196 (CVPVDPCAGRAPGRYPMDERLLDTLVHNQPSDKDYSAGEHLHHPTLYLRC) adopts a C2HC BV-type zinc-finger fold. Intrachain disulfides connect C207–C220 and C260–C273. N210 is a glycosylation site (N-linked (GlcNAc...) asparagine; by host). Residues 223–281 (NELCEGRPDGFVLAYFPETLRVNEFVECRGGKHVVARCPDQQVFDRALMTCVQTHPCAF) form the Chitin-binding type-2 domain. N-linked (GlcNAc...) asparagine; by host glycans are attached at residues N588 and N609. Positions 650 to 671 (GDGDHWAPEAPPTQPEAPPAPE) are disordered. Pro residues predominate over residues 658-671 (EAPPTQPEAPPAPE). N-linked (GlcNAc...) asparagine; by host glycosylation is present at N752.

The protein localises to the virion. Its function is as follows. Probable capsid-associated protein. The polypeptide is Capsid-associated protein Vp91 (p91) (Orgyia pseudotsugata (Douglas-fir tussock moth)).